An 888-amino-acid polypeptide reads, in one-letter code: Leukocyte tyrosine kinase receptor (888 aa).

The first 16 residues, M1–T16, serve as a signal peptide directing secretion. Residues I17–P421 lie on the Extracellular side of the membrane. 2 disulfides stabilise this stretch: C73-C86 and C168-C179. Residues L226–G294 are disordered. Over residues G260–G273 the composition is skewed to gly residues. A disulfide bond links C297 and C319. N377 and N409 each carry an N-linked (GlcNAc...) asparagine glycan. Residues L422 to V446 traverse the membrane as a helical segment. The Cytoplasmic segment spans residues N447 to Q888. One can recognise a Protein kinase domain in the interval V506–V782. Residues L512 to V520 and K540 contribute to the ATP site. The Proton acceptor role is filled by D639. Y672 carries the phosphotyrosine; by autocatalysis modification. Residues T857–Q888 form a disordered region. Residues N877–Q888 are compositionally biased toward polar residues.

The protein belongs to the protein kinase superfamily. Tyr protein kinase family. Insulin receptor subfamily. Homodimer; homodimerizes following ligand-binding. Part of a complex including LTK, TNK2 and GRB2, in which GRB2 promotes LTK recruitment by TNK2. Phosphorylated at tyrosine residues by autocatalysis, which activates kinase activity. In terms of tissue distribution, subsets of lymphoid and neuronal cells.

The protein resides in the cell membrane. It localises to the endoplasmic reticulum. It catalyses the reaction L-tyrosyl-[protein] + ATP = O-phospho-L-tyrosyl-[protein] + ADP + H(+). Its activity is regulated as follows. Activated by ligand-binding, leading to homodimerization and autophosphorylation. Its function is as follows. Receptor with a tyrosine-protein kinase activity. Following activation by ALKAL1 or ALKAL2 ligands at the cell surface, transduces an extracellular signal into an intracellular response. Ligand-binding to the extracellular domain induces tyrosine kinase activation, leading to activation of the mitogen-activated protein kinase (MAPK) pathway. Phosphorylates almost exclusively at the first tyrosine of the Y-x-x-x-Y-Y motif. The exact function of this protein is not known; studies with chimeric proteins demonstrate its ability to promote growth and specifically neurite outgrowth, and cell survival. Involved in regulation of the secretory pathway involving endoplasmic reticulum (ER) export sites (ERESs) and ER to Golgi transport. This is Leukocyte tyrosine kinase receptor from Mus musculus (Mouse).